Consider the following 374-residue polypeptide: Ribosomal RNA large subunit methyltransferase G (374 aa).

The protein belongs to the methyltransferase superfamily. RlmG family.

It localises to the cytoplasm. The enzyme catalyses guanosine(1835) in 23S rRNA + S-adenosyl-L-methionine = N(2)-methylguanosine(1835) in 23S rRNA + S-adenosyl-L-homocysteine + H(+). Its function is as follows. Specifically methylates the guanine in position 1835 (m2G1835) of 23S rRNA. This is Ribosomal RNA large subunit methyltransferase G from Pseudomonas fluorescens (strain Pf0-1).